A 717-amino-acid polypeptide reads, in one-letter code: Ribosomal RNA large subunit methyltransferase K/L (717 aa).

One can recognise a THUMP domain in the interval 44 to 155 (DAYKVCIYSY…KQFVNVFLCL (112 aa)).

Belongs to the methyltransferase superfamily. RlmKL family.

The protein localises to the cytoplasm. The catalysed reaction is guanosine(2445) in 23S rRNA + S-adenosyl-L-methionine = N(2)-methylguanosine(2445) in 23S rRNA + S-adenosyl-L-homocysteine + H(+). It catalyses the reaction guanosine(2069) in 23S rRNA + S-adenosyl-L-methionine = N(2)-methylguanosine(2069) in 23S rRNA + S-adenosyl-L-homocysteine + H(+). Functionally, specifically methylates the guanine in position 2445 (m2G2445) and the guanine in position 2069 (m7G2069) of 23S rRNA. The polypeptide is Ribosomal RNA large subunit methyltransferase K/L (Francisella tularensis subsp. holarctica (strain FTNF002-00 / FTA)).